Here is a 320-residue protein sequence, read N- to C-terminus: Homeobox-leucine zipper protein HOX25 (320 aa).

Residues 79–139 (AAARKRRLTA…NRRARWKTKQ (61 aa)) constitute a DNA-binding region (homeobox). The segment at 138–182 (KQLELDFDRLRAAHDELLAGRTALAADNESLRSQVILLTEKLQAN) is leucine-zipper. Disordered stretches follow at residues 181–209 (ANGK…KSFQ) and 249–282 (DSPE…PSSS). Residues 265-278 (SEDDCGGAGSDDDY) are compositionally biased toward acidic residues.

Belongs to the HD-ZIP homeobox family. Class I subfamily. In terms of tissue distribution, expressed in roots, leaf sheaths and blades and panicles.

The protein localises to the nucleus. Probable transcription factor. The protein is Homeobox-leucine zipper protein HOX25 (HOX25) of Oryza sativa subsp. japonica (Rice).